The primary structure comprises 1447 residues: MAAQGEAVEEIICEFDDDLVSELSTLLRVDALSVLKRQQEEDHKTRMKMKKGFNSQMRSEAKRLKTFETYDKFRSWTPQEMAAAGFYHTGVKLGVQCFCCSLILFSTRLRKLPIENHKKLRPECEFLLGKDVGNIGKYDIRVKSPEKMLRGDKARYHEEEARLESFEDWPFYAHGTSPRVLSAAGFVFTGKRDTVQCFSCGGCLGNWEEGDDPWKEHAKWFPKCEFLQSKKSPEEITQYVQSYEGFLHVTGEHFVNSWVRRELPMVSAYCNDSVFANEELRMDTFKDWPHESPGAVEALVKAGLFYTGKRDIVQCFSCGGCMEKWAEGDNPIEDHTKFFPNCVFLQTLKSSAEVIPALQSHCALPEAMETTSESNHDDAAAVHSTVVDVSPSEAQELEPASSLVSVLCRDQDHSEAQGRGCASSGTYLPSTDLGQSEAQWLQEARSLSEQLRDTYTKATFRHMNLPEVYSSLGTDHLLSCDVSIISKHISQPVQGSLTIPEVFSNLNSVMCVEGEAGSGKTTFLKRIAFLWASGCCPLLYRFQLVFYLSLSSITPGQELAKIICAQLLGAGGCISEVCLSSIIQQLQHQVLFLLDDYSGLASLPQALHTLITKNYLSRTCLLIAVHTNKVRGIRPYLDTSLEIKEFPFYNTVSVLRKLFSHDIMRVRKFINYFGFHEELQGIHKTPLFVAAVCTDWFKNPSDQPFQDVALFKAYMQYLSLKHKGAAKPLQATVSSCGQLALTGLFSSCFEFNSDNLAEAGVDEDEELTTCLMSKFTAQRLRPVYRFLGPLFQEFLAAVRLTELLSSDRQEDQDLGLYYLRQINSPLKAMSIYHTFLKYVSSHPSSKAAPTVVSHLLQLVDEKESLENMSENEDYMKLHPEALLWIECLRGLWQLSPESFSLFISENLLRICLNFAHESNTVAACSPVILQFLRGRTLDLKVLSLQYFWDHPETLLLLKSIKISLNGNNWVQRIDFSLIEKSFEKVQPPTIDQDYAIAFQPINEVQKNLSEKKHIIKKYEDMKHQIPLNISTGYWKLSPKPYKIPKLEVQVTNTGPADQALLQVLMEVFSASQSIEFRLSDSSGFLESIRPALELSKASVTKCSMSRLELSREDQKLLLTLPTLQSLEVSETNQLPDQLFHNLHKFLGLKELCVRLDSKPDVLSVLPGEFPNLHHMEKLSIRTSTESDLSKLVKLIQNSPNLHVFHLKCNFLSNCEPLMTVLASCKKLREIEFSGRCFEAMTFVNILPNFVFLKILNLRDQQFPDKETSEKFAQALGSLRNLEKLFVPTGDGIHQVAKLIVRQCLQLPCLRVLVFAETLDDDSVLEIAKGATRGGFQKLENLDLTLNHKITEEGYRNFFQVLDNLPNLKNLDISRHIPECIQIQAITVKALGQCVSRLPSLTRLGMLSWLLDEEDIKVINDVKERHPQSKRLTVHWRWVVPFSPVIQK.

BIR repeat units lie at residues 60–127 (EAKR…CEFL), 159–227 (EEAR…CEFL), and 278–345 (EELR…CVFL). Zn(2+) is bound by residues cysteine 315, cysteine 318, histidine 335, and cysteine 342. The NACHT domain maps to 508–802 (SVMCVEGEAG…EFLAAVRLTE (295 aa)). Lysine 520 lines the ATP pocket.

Component of the NLRC4 inflammasome, at least composed of NLRC4, caspase-1 (CASP1) and some NAIP protein. Interacts with S.typhimurium (Salmonella) PrgJ and B.thailandensis BsaK.

Its function is as follows. Sensor component of the NLRC4 inflammasome that specifically recognizes and binds type III secretion system (T3SS) rod proteins such as S.typhimurium (Salmonella) PrgJ and B.thailandensis BsaK from pathogenic bacteria. Association of pathogenic bacteria proteins drives in turn drive assembly and activation of the NLRC4 inflammasome, promoting caspase-1 activation, cytokine production and macrophage pyroptosis. The NLRC4 inflammasome is activated as part of the innate immune response to a range of intracellular bacteria. The NLRC4 inflammasome senses Gram-negative bacteria such as L.pneumophila and P.aeruginosa, enteric pathogens S.typhimurium (Salmonella) and S.flexneri. Prevents motor-neuron apoptosis induced by a variety of signals. This is Baculoviral IAP repeat-containing protein 1b (Naip2) from Mus musculus (Mouse).